Consider the following 147-residue polypeptide: Small ribosomal subunit protein uS13 (147 aa).

The tract at residues 115-147 (SYKGRRHEAGLPVRGQRTKSTFRNSSSVGVKRS) is disordered. Over residues 132–147 (TKSTFRNSSSVGVKRS) the composition is skewed to polar residues.

It belongs to the universal ribosomal protein uS13 family. Part of the 30S ribosomal subunit. Forms a loose heterodimer with protein S19. Forms two bridges to the 50S subunit in the 70S ribosome.

Functionally, located at the top of the head of the 30S subunit, it contacts several helices of the 16S rRNA. In the 70S ribosome it contacts the 23S rRNA (bridge B1a) and protein L5 of the 50S subunit (bridge B1b), connecting the 2 subunits; these bridges are implicated in subunit movement. In Methanobrevibacter smithii (strain ATCC 35061 / DSM 861 / OCM 144 / PS), this protein is Small ribosomal subunit protein uS13.